A 312-amino-acid chain; its full sequence is Ribonuclease Z (312 aa).

Residues His63, His65, Asp67, His68, His141, Asp212, and His270 each contribute to the Zn(2+) site. The Proton acceptor role is filled by Asp67.

The protein belongs to the RNase Z family. In terms of assembly, homodimer. Requires Zn(2+) as cofactor.

The catalysed reaction is Endonucleolytic cleavage of RNA, removing extra 3' nucleotides from tRNA precursor, generating 3' termini of tRNAs. A 3'-hydroxy group is left at the tRNA terminus and a 5'-phosphoryl group is left at the trailer molecule.. Zinc phosphodiesterase, which displays some tRNA 3'-processing endonuclease activity. Probably involved in tRNA maturation, by removing a 3'-trailer from precursor tRNA. The sequence is that of Ribonuclease Z from Lactobacillus helveticus (strain DPC 4571).